Reading from the N-terminus, the 148-residue chain is Lysozyme C-1 (148 aa).

Positions 1 to 18 are cleaved as a signal peptide; the sequence is MKALLVLGFLLLSASVQA. The region spanning 19–148 is the C-type lysozyme domain; it reads KIYERCQFAR…LSGYIRNCGV (130 aa). Cystine bridges form between cysteine 24–cysteine 146, cysteine 48–cysteine 134, cysteine 83–cysteine 99, and cysteine 95–cysteine 113. Active-site residues include glutamate 53 and aspartate 71.

This sequence belongs to the glycosyl hydrolase 22 family. Monomer. As to expression, expressed in lung, small intestine and spleen.

The protein localises to the secreted. It carries out the reaction Hydrolysis of (1-&gt;4)-beta-linkages between N-acetylmuramic acid and N-acetyl-D-glucosamine residues in a peptidoglycan and between N-acetyl-D-glucosamine residues in chitodextrins.. In terms of biological role, lysozymes have primarily a bacteriolytic function; those in tissues and body fluids are associated with the monocyte-macrophage system and enhance the activity of immunoagents. In the intestine they may also have a digestive function. The polypeptide is Lysozyme C-1 (Lyz1) (Rattus norvegicus (Rat)).